The chain runs to 403 residues: MTVEMKVERGLFDEVMVPCYNPMEMIPVKGQGSRIWDQNGNEYIDFAGGIAVSCLGHCHPVMVNALTEQAGKLWHLSNVMTNEPALRLAKKLTEVSFAERVFFANSGAEANEAALKLARRYAADVYGPEKSEIIAFKQGFHGRTFFTVTVGGQAAYSDGFGPKPGDVTHLPYNDIEALQAHISDRTCAVMMEPLQGEGGIIPPTAEFIQAVRELCDKHNALLVFDEVQTGNGRTGEFYAYQGLGVTPDILSTAKSLGGGFPIGAMLTTAKLAEHLKVGTHGSTYGGNPLACAVAEAVVTEVSKPETLQGVKEREQWFREGLAKLNEKYQIFAEIRGKGLLLGAALNEQWQGRARDVLVAAGKEGLLVLVAGANVVRFTPSLVITKQEIEEGFAKLDKAIASLV.

Residues G107 to A108 and F140 contribute to the pyridoxal 5'-phosphate site. R143 provides a ligand contact to N(2)-acetyl-L-ornithine. D225–Q228 provides a ligand contact to pyridoxal 5'-phosphate. An N6-(pyridoxal phosphate)lysine modification is found at K254. A N(2)-acetyl-L-ornithine-binding site is contributed by S282. T283 contributes to the pyridoxal 5'-phosphate binding site.

The protein belongs to the class-III pyridoxal-phosphate-dependent aminotransferase family. ArgD subfamily. As to quaternary structure, homodimer. Pyridoxal 5'-phosphate serves as cofactor.

The protein resides in the cytoplasm. The enzyme catalyses N(2)-acetyl-L-ornithine + 2-oxoglutarate = N-acetyl-L-glutamate 5-semialdehyde + L-glutamate. It functions in the pathway amino-acid biosynthesis; L-arginine biosynthesis; N(2)-acetyl-L-ornithine from L-glutamate: step 4/4. In Vibrio vulnificus (strain YJ016), this protein is Acetylornithine aminotransferase.